We begin with the raw amino-acid sequence, 359 residues long: Alanine racemase (359 aa).

Lysine 34 acts as the Proton acceptor; specific for D-alanine in catalysis. Lysine 34 is modified (N6-(pyridoxal phosphate)lysine). Residue arginine 129 participates in substrate binding. Tyrosine 255 serves as the catalytic Proton acceptor; specific for L-alanine. Methionine 303 is a substrate binding site.

This sequence belongs to the alanine racemase family. It depends on pyridoxal 5'-phosphate as a cofactor.

It carries out the reaction L-alanine = D-alanine. The protein operates within amino-acid biosynthesis; D-alanine biosynthesis; D-alanine from L-alanine: step 1/1. Catalyzes the interconversion of L-alanine and D-alanine. May also act on other amino acids. This Shigella dysenteriae serotype 1 (strain Sd197) protein is Alanine racemase (alr).